The following is a 453-amino-acid chain: Glutamyl-tRNA(Gln) amidotransferase subunit A (453 aa).

Residues lysine 55 and serine 130 each act as charge relay system in the active site. The active-site Acyl-ester intermediate is serine 154.

This sequence belongs to the amidase family. GatA subfamily. Heterotrimer of A, B and C subunits.

The enzyme catalyses L-glutamyl-tRNA(Gln) + L-glutamine + ATP + H2O = L-glutaminyl-tRNA(Gln) + L-glutamate + ADP + phosphate + H(+). Functionally, allows the formation of correctly charged Gln-tRNA(Gln) through the transamidation of misacylated Glu-tRNA(Gln) in organisms which lack glutaminyl-tRNA synthetase. The reaction takes place in the presence of glutamine and ATP through an activated gamma-phospho-Glu-tRNA(Gln). This Aliarcobacter butzleri (strain RM4018) (Arcobacter butzleri) protein is Glutamyl-tRNA(Gln) amidotransferase subunit A.